The following is a 309-amino-acid chain: Ribosomal RNA small subunit methyltransferase H (309 aa).

S-adenosyl-L-methionine contacts are provided by residues 36–38 (GGH), D56, F82, D103, and Q110.

The protein belongs to the methyltransferase superfamily. RsmH family.

It localises to the cytoplasm. The enzyme catalyses cytidine(1402) in 16S rRNA + S-adenosyl-L-methionine = N(4)-methylcytidine(1402) in 16S rRNA + S-adenosyl-L-homocysteine + H(+). In terms of biological role, specifically methylates the N4 position of cytidine in position 1402 (C1402) of 16S rRNA. The polypeptide is Ribosomal RNA small subunit methyltransferase H (Hahella chejuensis (strain KCTC 2396)).